A 478-amino-acid polypeptide reads, in one-letter code: Cytochrome P450 monooxygenase asqL (478 aa).

Cys-407 serves as a coordination point for heme.

This sequence belongs to the cytochrome P450 family. The cofactor is heme.

It functions in the pathway secondary metabolite biosynthesis. Its pathway is alkaloid biosynthesis. The protein operates within mycotoxin biosynthesis. In terms of biological role, cytochrome P450 monooxygenase; part of the gene cluster that mediates the biosynthesis of the aspoquinolone mycotoxins. The role of asqL within the aspoquinolone pathway has still to be determined. The first step of the pathway is catalyzed by the nonribosomal peptide synthetase asqK that condenses anthranilic acid and O-methyl-L-tyrosine to produce 4'-methoxycyclopeptin. 4'-methoxycyclopeptin is then converted to 4'-methoxydehydrocyclopeptin by the ketoglutarate-dependent dioxygenase asqJ. AsqJ also converts its first product 4'-methoxydehydrocyclopeptin to 4'-methoxycyclopenin. The following conversion of 4'-methoxycyclopenin into 4'-methoxyviridicatin is catalyzed by the cyclopenase asqI. 4'-methoxyviridicatin is the precursor of quinolone natural products, and is further converted to quinolinone B. The prenyltransferase asqH1 then catalyzes the canonical Friedel-Crafts alkylation of quinolinone B with dimethylallyl cation to yield dimethylallyl quinolone, which is subjected to FAD-dependent dehydrogenation by the FAD-linked oxidoreductase asqF to yield conjugated aryl diene. The delta(3') double bond then serves as the site of the second alkylation with DMAPP catalyzed by the prenyltransferase asqH2 to yield a carbenium ion intermediate, which can be attacked by H(2)O to yield a styrenyl quinolone containing a C3'-hydroxyprenyl chain. The FAD-dependent monooxygenase asqG performs epoxidation of the terminal C7'-C8' olefin. Finally, after dehydratation of the epoxide at C3 by asqC, the quinolone epoxide rearrangement protein asqO catalyzes an enzymatic 3-exo-tet cyclization to yield the cyclopropyl-THF ring system in aspoquinolone. In Emericella nidulans (strain FGSC A4 / ATCC 38163 / CBS 112.46 / NRRL 194 / M139) (Aspergillus nidulans), this protein is Cytochrome P450 monooxygenase asqL.